We begin with the raw amino-acid sequence, 201 residues long: Recombination protein RecR (201 aa).

The C4-type zinc-finger motif lies at 57–72 (CKYCSNFGNKDECDIC). Positions 80-176 (TKLMIVTTNE…QIYRIGFGIP (97 aa)) constitute a Toprim domain.

It belongs to the RecR family.

Its function is as follows. May play a role in DNA repair. It seems to be involved in an RecBC-independent recombinational process of DNA repair. It may act with RecF and RecO. The polypeptide is Recombination protein RecR (Ureaplasma urealyticum serovar 10 (strain ATCC 33699 / Western)).